Reading from the N-terminus, the 202-residue chain is Dephospho-CoA kinase (202 aa).

One can recognise a DPCK domain in the interval Thr-3–Leu-202. ATP is bound at residue Gly-11 to Val-16. Residues Arg-138–Gln-161 are disordered.

It belongs to the CoaE family.

The protein resides in the cytoplasm. The catalysed reaction is 3'-dephospho-CoA + ATP = ADP + CoA + H(+). It functions in the pathway cofactor biosynthesis; coenzyme A biosynthesis; CoA from (R)-pantothenate: step 5/5. Catalyzes the phosphorylation of the 3'-hydroxyl group of dephosphocoenzyme A to form coenzyme A. This Porphyromonas gingivalis (strain ATCC BAA-308 / W83) protein is Dephospho-CoA kinase.